The sequence spans 245 residues: Collagen triple helix repeat-containing protein 1 (245 aa).

Residues 1–32 form the signal peptide; it reads MHPQGRAASPQLLLGLFLVLLLLLQLSAPSSA. Residues 59 to 92 form the Collagen-like domain; that stretch reads QGPAGVPGRDGSPGANGIPGTPGIPGRDGFKGEK. The disordered stretch occupies residues 64 to 87; the sequence is VPGRDGSPGANGIPGTPGIPGRDG. N-linked (GlcNAc...) asparagine glycosylation occurs at Asn188.

N-glycosylated. In terms of tissue distribution, expressed after injury in the carotid arteries (at protein level). Expressed in brain, lung, and after injury in fibroblasts of the adventitia and the neointima of the arteries.

Its subcellular location is the secreted. It is found in the extracellular space. The protein resides in the extracellular matrix. Functionally, its overexpression in smooth muscle cell lines increases their migratory ability and inhibits collagen type I expression. May act as a negative regulator of collagen matrix deposition. This is Collagen triple helix repeat-containing protein 1 (Cthrc1) from Rattus norvegicus (Rat).